The chain runs to 346 residues: Dehydrogenase orf1 (346 aa).

43–48 (VDYATQ) serves as a coordination point for NADP(+). 133–140 (LAFSTAIV) contributes to the substrate binding site. NADP(+)-binding positions include 170 to 173 (ATSV), 193 to 196 (SPHN), Tyr-211, and 251 to 252 (LN). 269 to 273 (APPNV) contributes to the substrate binding site. NADP(+) is bound at residue 336 to 337 (VS).

It belongs to the zinc-containing alcohol dehydrogenase family.

It functions in the pathway secondary metabolite biosynthesis. Its function is as follows. Dehydrogenase; part of the gene cluster that mediates the biosynthesis of nigerpyrone and its derivatives carbonarone A and pestalamide A. The biosynthesis pathway begins with the polyketide assembly by epaA to form phenylacetyl triketide precursor from successive condensation of two malonyl-CoA, presumably with one phenylacetyl-CoA starter unit produced by the phenylacetyl-CoA ligase epaB. For the nigerpyrone biosynthesis, the reactive polyketide chain is released as an aldehyde through the R-domain. A nonenzymatic cyclization and dehydration may create nigerpyrone. For the biosynthesis of carbonarone A and pestalamide A, an extra methyl group is added through the C-methyltransferase domain. Several further steps involving the dehydrogenase orf1, the cytochrome P450 monooxygenase orf2 and the FAD-dependent monooxygenase orf3 are required to form a carbonarone A precursor which is converted to carbonarone A via cyclization. The O-acetyltransferase epaC could catalyze the transfer of 2-methylsuccinyl-CoA, a common intermediate in the ethylmalonyl-CoA pathway, to generate the final product pestalamide A. The chain is Dehydrogenase orf1 from Aspergillus niger (strain ATCC MYA-4892 / CBS 513.88 / FGSC A1513).